Consider the following 361-residue polypeptide: Chorismate synthase (361 aa).

Residues 37–59 form a disordered region; that stretch reads TEEDLQHDLDRRRPGTSRYTTPR. Residues 40–49 are compositionally biased toward basic and acidic residues; it reads DLQHDLDRRR. The NADP(+) site is built by Arg48 and Arg54. FMN is bound by residues 125–127, 238–239, Gly278, 293–297, and Arg319; these read RSS, NA, and KPTSS.

Belongs to the chorismate synthase family. As to quaternary structure, homotetramer. It depends on FMNH2 as a cofactor.

The enzyme catalyses 5-O-(1-carboxyvinyl)-3-phosphoshikimate = chorismate + phosphate. It functions in the pathway metabolic intermediate biosynthesis; chorismate biosynthesis; chorismate from D-erythrose 4-phosphate and phosphoenolpyruvate: step 7/7. Functionally, catalyzes the anti-1,4-elimination of the C-3 phosphate and the C-6 proR hydrogen from 5-enolpyruvylshikimate-3-phosphate (EPSP) to yield chorismate, which is the branch point compound that serves as the starting substrate for the three terminal pathways of aromatic amino acid biosynthesis. This reaction introduces a second double bond into the aromatic ring system. This chain is Chorismate synthase, found in Erwinia tasmaniensis (strain DSM 17950 / CFBP 7177 / CIP 109463 / NCPPB 4357 / Et1/99).